Consider the following 24-residue polypeptide: Antimicrobial peptide PGQ (24 aa).

It belongs to the gastrin/cholecystokinin family. Magainin subfamily. Is synthesized in the stomach and stored in a novel granular multinucleated cell in the gastric mucosa. It is stored as active, processed peptides in large granules within the granular gland secretions of the skin.

It localises to the secreted. In terms of biological role, antimicrobial peptide. This chain is Antimicrobial peptide PGQ (pgq), found in Xenopus laevis (African clawed frog).